Here is a 455-residue protein sequence, read N- to C-terminus: Argininosuccinate synthase (455 aa).

ATP is bound by residues 17-25 (AFSGGLDTS) and Ala-43. Tyr-99 lines the L-citrulline pocket. Positions 129 and 131 each coordinate ATP. Residues Thr-131, Asn-135, and Asp-136 each coordinate L-aspartate. Asn-135 is a binding site for L-citrulline. An ATP-binding site is contributed by Asp-136. Residues Arg-139 and Ser-192 each contribute to the L-citrulline site. ATP is bound at residue Asp-194. The L-citrulline site is built by Thr-201, Glu-203, and Glu-280. The span at 434-448 (TGLPQVDNNNLSSGR) shows a compositional bias: polar residues. The segment at 434–455 (TGLPQVDNNNLSSGRGLQDKRQ) is disordered.

The protein belongs to the argininosuccinate synthase family. Type 2 subfamily. As to quaternary structure, homotetramer.

The protein localises to the cytoplasm. It catalyses the reaction L-citrulline + L-aspartate + ATP = 2-(N(omega)-L-arginino)succinate + AMP + diphosphate + H(+). It functions in the pathway amino-acid biosynthesis; L-arginine biosynthesis; L-arginine from L-ornithine and carbamoyl phosphate: step 2/3. The sequence is that of Argininosuccinate synthase (argG) from Yersinia pestis.